The chain runs to 414 residues: Imidazolonepropionase (414 aa).

Fe(3+) contacts are provided by H77 and H79. 2 residues coordinate Zn(2+): H77 and H79. Positions 86, 149, and 184 each coordinate 4-imidazolone-5-propanoate. Position 149 (Y149) interacts with N-formimidoyl-L-glutamate. H249 provides a ligand contact to Fe(3+). H249 is a Zn(2+) binding site. 4-imidazolone-5-propanoate is bound at residue E252. A Fe(3+)-binding site is contributed by D323. D323 contributes to the Zn(2+) binding site. Positions 325 and 327 each coordinate N-formimidoyl-L-glutamate. S328 is a 4-imidazolone-5-propanoate binding site.

The protein belongs to the metallo-dependent hydrolases superfamily. HutI family. Zn(2+) serves as cofactor. The cofactor is Fe(3+).

It is found in the cytoplasm. It catalyses the reaction 4-imidazolone-5-propanoate + H2O = N-formimidoyl-L-glutamate. The protein operates within amino-acid degradation; L-histidine degradation into L-glutamate; N-formimidoyl-L-glutamate from L-histidine: step 3/3. Catalyzes the hydrolytic cleavage of the carbon-nitrogen bond in imidazolone-5-propanoate to yield N-formimidoyl-L-glutamate. It is the third step in the universal histidine degradation pathway. In Phocaeicola vulgatus (strain ATCC 8482 / DSM 1447 / JCM 5826 / CCUG 4940 / NBRC 14291 / NCTC 11154) (Bacteroides vulgatus), this protein is Imidazolonepropionase.